Here is a 537-residue protein sequence, read N- to C-terminus: Synaptotagmin-C (537 aa).

At 1 to 52 (MSGDGEDELCRNALALVNELCFSVRGNHNNEKCIEFSYLLRDRDRTRHIETD) the chain is on the vesicular side. Residues 53-78 (ISVSLLSVIVTFCGIVLLGVSLFVSW) form a helical membrane-spanning segment. At 79–537 (KLCWIPWRDK…TIVVESPHSV (459 aa)) the chain is on the cytoplasmic side. 2 disordered regions span residues 92-111 (PQRRDSQHHPHQHLHHHHSH) and 142-200 (IKLS…EFGT). Residues 100–110 (HPHQHLHHHHS) are compositionally biased toward basic residues. The span at 143–174 (KLSQTSPDIPVDTSSGSKENNIPNAHSQQQVS) shows a compositional bias: polar residues. Positions 228–477 (EAKKHQKVNC…VIGMCRVGNA (250 aa)) are phospholipid binding. C2 domains lie at 236–357 (NCGR…TIWR) and 368–501 (DLGE…EQWH). Asp267, Asp273, Asp325, Phe326, Asp327, Ser330, Asp333, Asp399, Asp405, Asp459, and Asp461 together coordinate Ca(2+).

It belongs to the synaptotagmin family. Homodimer or homotrimer (possible). It depends on Ca(2+) as a cofactor.

It is found in the cytoplasmic vesicle. It localises to the secretory vesicle. Its subcellular location is the synaptic vesicle membrane. The protein localises to the synapse. Functionally, may have a regulatory role in the membrane interactions during trafficking of synaptic vesicles at the active zone of the synapse. It binds acidic phospholipids with a specificity that requires the presence of both an acidic head group and a diacyl backbone. The protein is Synaptotagmin-C (P65-C) of Diplobatis ommata (Ocellated electric ray).